The primary structure comprises 272 residues: Interleukin-2 receptor subunit alpha (272 aa).

The signal sequence occupies residues 1–21 (MDPYLLMWGLLTFITVPGCQA). In terms of domain architecture, Sushi 1 spans 22–84 (ELCDDDPPKI…SWDNQCQCTS (63 aa)). Residues 22–240 (ELCDDDPPKI…ETFIFTTEYQ (219 aa)) are Extracellular-facing. Intrachain disulfides connect Cys-24–Cys-67, Cys-49–Cys-80, and Cys-51–Cys-82. Asn-70 and Asn-89 each carry an N-linked (GlcNAc...) asparagine glycan. Over residues 87–98 (ARNTTKQVTPQP) the composition is skewed to polar residues. The segment at 87–109 (ARNTTKQVTPQPEEQKERKTTEM) is disordered. The Sushi 2 domain occupies 123–186 (GHCREPPPWE…WTQPQLICTG (64 aa)). Cystine bridges form between Cys-125/Cys-168 and Cys-152/Cys-184. A disordered region spans residues 186-213 (GETEPSQFPGEEEPQASPDGLPESETSR). The chain crosses the membrane as a helical span at residues 241-259 (VAVAGCVFLLISVLLLSGL). The Cytoplasmic segment spans residues 260 to 272 (TWQRRQRKNRRTI).

As to quaternary structure, non-covalent dimer of an alpha and a beta subunit. IL2R exists in 3 different forms: a high affinity dimer, an intermediate affinity monomer (beta subunit), and a low affinity monomer (alpha subunit). The high and intermediate affinity forms also associate with a gamma subunit.

The protein resides in the membrane. Receptor for interleukin-2. The receptor is involved in the regulation of immune tolerance by controlling regulatory T cells (TREGs) activity. TREGs suppress the activation and expansion of autoreactive T-cells. This Macaca mulatta (Rhesus macaque) protein is Interleukin-2 receptor subunit alpha (IL2RA).